The primary structure comprises 198 residues: Probable nicotinate-nucleotide adenylyltransferase (198 aa).

The protein belongs to the NadD family.

It carries out the reaction nicotinate beta-D-ribonucleotide + ATP + H(+) = deamido-NAD(+) + diphosphate. The protein operates within cofactor biosynthesis; NAD(+) biosynthesis; deamido-NAD(+) from nicotinate D-ribonucleotide: step 1/1. Catalyzes the reversible adenylation of nicotinate mononucleotide (NaMN) to nicotinic acid adenine dinucleotide (NaAD). The chain is Probable nicotinate-nucleotide adenylyltransferase from Chlorobium phaeobacteroides (strain BS1).